The primary structure comprises 499 residues: Probable UTP--glucose-1-phosphate uridylyltransferase (499 aa).

Residues 108–111 (LNGG), Lys122, Gln185, and Gly214 contribute to the UTP site. 110–111 (GG) provides a ligand contact to substrate. Substrate contacts are provided by residues His215 and 243 to 245 (NID). The UTP site is built by Asp245 and Lys387.

This sequence belongs to the UDPGP type 1 family.

It is found in the cytoplasm. The protein resides in the nucleus. The catalysed reaction is alpha-D-glucose 1-phosphate + UTP + H(+) = UDP-alpha-D-glucose + diphosphate. In terms of biological role, plays a central role as a glucosyl donor in cellular metabolic pathways. This Schizosaccharomyces pombe (strain 972 / ATCC 24843) (Fission yeast) protein is Probable UTP--glucose-1-phosphate uridylyltransferase.